A 554-amino-acid chain; its full sequence is Cytochrome P450 monooxygenase himC (554 aa).

A helical membrane pass occupies residues 52–72; it reads YSVASVAIAGFTALVVSVALY. N-linked (GlcNAc...) asparagine glycosylation is found at N110, N328, N414, and N425. Residue C501 participates in heme binding.

This sequence belongs to the cytochrome P450 family. It depends on heme as a cofactor.

Its subcellular location is the membrane. It functions in the pathway secondary metabolite biosynthesis. Cytochrome P450 monooxygenase; part of the him gene cluster that mediates the biosynthesis of himeic acid A, a ubiquitin-activating enzyme (E1) inhibitor. First, himA, together with the trans-enoyl reductase himH, catalyzes the formation of apolyketide chain, which is then condensed with leucine by the NRPS activity of himA. Dieckmann cyclization and release from himA gives a tetramic acid intermediate as the product of himA PKS-NRPS. HimG then catalyzes alpha-oxidation of the tetramic acid ring, with a subsequent rearrangement to yield apyrone intermediate. Two terminal methyl groups of polyketide and amide side chains are oxidized to carboxylic acids by himC cytochrome P450 monooxygenase to form himeic acid A. Himeic acid A is further converted to himeic acid B and C during culture growth. No gene responsible for pyrone to pyridone conversion was found in the him gene cluster and himeic acid A is non-enzymatically converted to himeic acid C by the incorporation of an ammonium nitrogen atom in a pH5 buffer, and to himeic acid B at a conversion ratio of 50% during incubation in MeOH for 5 days. The chain is Cytochrome P450 monooxygenase himC from Aspergillus japonicus.